Reading from the N-terminus, the 449-residue chain is Exodeoxyribonuclease 7 large subunit (449 aa).

The protein belongs to the XseA family. In terms of assembly, heterooligomer composed of large and small subunits.

The protein localises to the cytoplasm. It carries out the reaction Exonucleolytic cleavage in either 5'- to 3'- or 3'- to 5'-direction to yield nucleoside 5'-phosphates.. Bidirectionally degrades single-stranded DNA into large acid-insoluble oligonucleotides, which are then degraded further into small acid-soluble oligonucleotides. The chain is Exodeoxyribonuclease 7 large subunit from Aliivibrio fischeri (strain MJ11) (Vibrio fischeri).